Reading from the N-terminus, the 122-residue chain is MADITAELVSVERLLWTGKATMVTAETTEGEIGVLPGHEPMVGQLIDNGVVTIHPVDGERLVAAVQGGFLSVSENKITVLADWSIWASEVDEAQAQEDLKSERELTRSRGDAALRATRRLNS.

Basic and acidic residues predominate over residues 97-112 (EDLKSERELTRSRGDA). A disordered region spans residues 97–122 (EDLKSERELTRSRGDAALRATRRLNS).

The protein belongs to the ATPase epsilon chain family. F-type ATPases have 2 components, CF(1) - the catalytic core - and CF(0) - the membrane proton channel. CF(1) has five subunits: alpha(3), beta(3), gamma(1), delta(1), epsilon(1). CF(0) has three main subunits: a, b and c.

The protein resides in the cell membrane. Functionally, produces ATP from ADP in the presence of a proton gradient across the membrane. In Corynebacterium aurimucosum (strain ATCC 700975 / DSM 44827 / CIP 107346 / CN-1) (Corynebacterium nigricans), this protein is ATP synthase epsilon chain.